The chain runs to 743 residues: Phosphoribosylformylglycinamidine synthase subunit PurL (743 aa).

The active site involves His-50. The ATP site is built by Tyr-53 and Lys-92. Position 94 (Glu-94) interacts with Mg(2+). Substrate-binding positions include 95–98 and Arg-117; that span reads SHNH. The Proton acceptor role is filled by His-96. Asp-118 serves as a coordination point for Mg(2+). Gln-241 lines the substrate pocket. Mg(2+) is bound at residue Asp-269. A substrate-binding site is contributed by 313-315; the sequence is ESQ. Residues Asp-494 and Gly-531 each contribute to the ATP site. Asn-532 is a Mg(2+) binding site. A substrate-binding site is contributed by Ser-534.

It belongs to the FGAMS family. Monomer. Part of the FGAM synthase complex composed of 1 PurL, 1 PurQ and 2 PurS subunits.

The protein resides in the cytoplasm. The enzyme catalyses N(2)-formyl-N(1)-(5-phospho-beta-D-ribosyl)glycinamide + L-glutamine + ATP + H2O = 2-formamido-N(1)-(5-O-phospho-beta-D-ribosyl)acetamidine + L-glutamate + ADP + phosphate + H(+). It participates in purine metabolism; IMP biosynthesis via de novo pathway; 5-amino-1-(5-phospho-D-ribosyl)imidazole from N(2)-formyl-N(1)-(5-phospho-D-ribosyl)glycinamide: step 1/2. Functionally, part of the phosphoribosylformylglycinamidine synthase complex involved in the purines biosynthetic pathway. Catalyzes the ATP-dependent conversion of formylglycinamide ribonucleotide (FGAR) and glutamine to yield formylglycinamidine ribonucleotide (FGAM) and glutamate. The FGAM synthase complex is composed of three subunits. PurQ produces an ammonia molecule by converting glutamine to glutamate. PurL transfers the ammonia molecule to FGAR to form FGAM in an ATP-dependent manner. PurS interacts with PurQ and PurL and is thought to assist in the transfer of the ammonia molecule from PurQ to PurL. The chain is Phosphoribosylformylglycinamidine synthase subunit PurL from Sinorhizobium fredii (strain HH103).